We begin with the raw amino-acid sequence, 496 residues long: Cobyric acid synthase (496 aa).

A GATase cobBQ-type domain is found at 258-427 (TLTVAAIRLP…WHGLLDNDAL (170 aa)). The Nucleophile role is filled by Cys-339. His-419 is a catalytic residue.

It belongs to the CobB/CobQ family. CobQ subfamily.

Its pathway is cofactor biosynthesis; adenosylcobalamin biosynthesis. Its function is as follows. Catalyzes amidations at positions B, D, E, and G on adenosylcobyrinic A,C-diamide. NH(2) groups are provided by glutamine, and one molecule of ATP is hydrogenolyzed for each amidation. In Mycolicibacterium smegmatis (strain ATCC 700084 / mc(2)155) (Mycobacterium smegmatis), this protein is Cobyric acid synthase.